The sequence spans 560 residues: DNA ligase B (560 aa).

Lys-124 (N6-AMP-lysine intermediate) is an active-site residue.

Belongs to the NAD-dependent DNA ligase family. LigB subfamily.

It catalyses the reaction NAD(+) + (deoxyribonucleotide)n-3'-hydroxyl + 5'-phospho-(deoxyribonucleotide)m = (deoxyribonucleotide)n+m + AMP + beta-nicotinamide D-nucleotide.. Its function is as follows. Catalyzes the formation of phosphodiester linkages between 5'-phosphoryl and 3'-hydroxyl groups in double-stranded DNA using NAD as a coenzyme and as the energy source for the reaction. In Shigella flexneri, this protein is DNA ligase B.